Here is a 66-residue protein sequence, read N- to C-terminus: Cysteine proteinase inhibitor (66 aa).

Positions 18-22 match the Secondary area of contact motif; that stretch reads QVVAG.

It belongs to the cystatin family. Phytocystatin subfamily. As to expression, in tubers of untreated plants. After ABA treatment or mechanical wounding is mostly accumulated in leaves, to a lesser extent in stems, but not in roots.

This chain is Cysteine proteinase inhibitor (CYS-PIN), found in Solanum tuberosum (Potato).